Consider the following 421-residue polypeptide: Inner membrane transport protein YdiN (421 aa).

Residues 1–9 (MSQNKAFST) are Cytoplasmic-facing. Residues 10-30 (PFILAVLCIYFSYFLHGISVI) traverse the membrane as a helical segment. Topologically, residues 31–49 (TLAQNMSSLAEKFSTDNAG) are periplasmic. The helical transmembrane segment at 50 to 70 (IAYLISGIGLGRLISILFFGV) threads the bilayer. Residues 71–78 (ISDKFGRR) are Cytoplasmic-facing. The helical transmembrane segment at 79 to 99 (AVILMAVIMYLLFFFGIPACP) threads the bilayer. Residue Asn-100 is a topological domain, periplasmic. Residues 101 to 121 (LTLAYGLAVCVGIANSALDTG) traverse the membrane as a helical segment. Residues 122–136 (GYPALMECFPKASGS) are Cytoplasmic-facing. The helical transmembrane segment at 137–157 (AVILVKAMVSFGQMFYPMLVS) threads the bilayer. Topologically, residues 158-163 (YMLLNN) are periplasmic. The chain crosses the membrane as a helical span at residues 164-184 (IWYGYGLIIPGILFVLITLML). Residues 185–215 (LKSKFPSQLVDASVTNELPQMNSKPLVWLEG) lie on the Cytoplasmic side of the membrane. Residues 216–236 (VSSVLFGVAAFSTFYVIVVWM) form a helical membrane-spanning segment. Topologically, residues 237 to 251 (PKYAMAFAGMSEAEA) are periplasmic. The helical transmembrane segment at 252–272 (LKTISYYSMGSLVCVFIFAAL) threads the bilayer. Residues 273–279 (LKKMVRP) lie on the Cytoplasmic side of the membrane. A helical membrane pass occupies residues 280–300 (IWANVFNSALATITAAIIYLY). Residues 301-308 (PSPLVCNA) lie on the Periplasmic side of the membrane. Residues 309 to 329 (GAFVIGFSAAGGILQLGVSVM) traverse the membrane as a helical segment. The Cytoplasmic segment spans residues 330–342 (SEFFPKSKAKVTS). The chain crosses the membrane as a helical span at residues 343–363 (IYMMMGGLANFVIPLITGYLS). Residues 364 to 369 (NIGLQY) are Periplasmic-facing. The chain crosses the membrane as a helical span at residues 370–390 (IIVLDFTFALLALITAIIVFI). Over 391–421 (RYYRVFIIPENDVRFGERKFCTRLNTIKHRG) the chain is Cytoplasmic.

Belongs to the major facilitator superfamily.

The protein resides in the cell inner membrane. This is Inner membrane transport protein YdiN (ydiN) from Escherichia coli (strain K12).